A 265-amino-acid polypeptide reads, in one-letter code: Undecaprenyl-diphosphatase (265 aa).

Transmembrane regions (helical) follow at residues 42 to 62 (AATF…VLYW), 82 to 102 (GIML…AAHS), 108 to 128 (LFTP…MLLV), 143 to 163 (MSPA…WPGF), 181 to 201 (GLAA…ATGY), 221 to 241 (GFVV…ALVG), and 248 to 264 (FAWY…YFMA).

Belongs to the UppP family.

Its subcellular location is the cell inner membrane. The enzyme catalyses di-trans,octa-cis-undecaprenyl diphosphate + H2O = di-trans,octa-cis-undecaprenyl phosphate + phosphate + H(+). Its function is as follows. Catalyzes the dephosphorylation of undecaprenyl diphosphate (UPP). Confers resistance to bacitracin. The protein is Undecaprenyl-diphosphatase of Nitratidesulfovibrio vulgaris (strain DP4) (Desulfovibrio vulgaris).